A 262-amino-acid chain; its full sequence is tRNA pseudouridine synthase A (262 aa).

Residue Asp-51 is the Nucleophile of the active site. Tyr-109 contributes to the substrate binding site.

Belongs to the tRNA pseudouridine synthase TruA family. As to quaternary structure, homodimer.

It carries out the reaction uridine(38/39/40) in tRNA = pseudouridine(38/39/40) in tRNA. Functionally, formation of pseudouridine at positions 38, 39 and 40 in the anticodon stem and loop of transfer RNAs. The chain is tRNA pseudouridine synthase A from Actinobacillus pleuropneumoniae serotype 3 (strain JL03).